The sequence spans 696 residues: Polyribonucleotide nucleotidyltransferase (696 aa).

Residues Asp483 and Asp489 each coordinate Mg(2+). One can recognise a KH domain in the interval 550 to 609; that stretch reads PRITTIYVKTDKIRDVIGSGGKNIRGITEATGVTIDIDDTGKINIASTDKAACDMAIKMI. An S1 motif domain is found at 619-687; the sequence is GKLYMGLVKK…KQGKIKLSRK (69 aa).

It belongs to the polyribonucleotide nucleotidyltransferase family. Mg(2+) is required as a cofactor.

Its subcellular location is the cytoplasm. It catalyses the reaction RNA(n+1) + phosphate = RNA(n) + a ribonucleoside 5'-diphosphate. Functionally, involved in mRNA degradation. Catalyzes the phosphorolysis of single-stranded polyribonucleotides processively in the 3'- to 5'-direction. The polypeptide is Polyribonucleotide nucleotidyltransferase (Geotalea daltonii (strain DSM 22248 / JCM 15807 / FRC-32) (Geobacter daltonii)).